Consider the following 932-residue polypeptide: Protocadherin gamma-A9 (932 aa).

The first 28 residues, 1-28 (MAAPTKCQLRGRLVLLCSLLGMLWEARA), serve as a signal peptide directing secretion. Cadherin domains are found at residues 29-133 (SQIR…APKF), 134-242 (QAES…APVF), 243-347 (AQRI…RPEV), 348-452 (TITS…PPAF), 453-562 (SQAS…APEI), and 570-683 (DGST…IPAD). The Extracellular portion of the chain corresponds to 29-692 (SQIRYSVPEE…DLEASDLTLY (664 aa)). Residues Asn47 and Asn127 are each glycosylated (N-linked (GlcNAc...) asparagine). 3 N-linked (GlcNAc...) asparagine glycosylation sites follow: Asn389, Asn419, and Asn545. Residues 693-713 (LVVAVAVVSCVFLTFVITLLA) form a helical membrane-spanning segment. The Cytoplasmic portion of the chain corresponds to 714–932 (LRLRHWHSSH…KKKSGKKEKK (219 aa)). Disordered stretches follow at residues 803–841 (DTPL…WPNN) and 902–932 (ATLT…KEKK). Positions 816–841 (WRFSQAQRPGTSGSQNGDDTGTWPNN) are enriched in polar residues. A compositionally biased stretch (basic residues) spans 922 to 932 (NKKKSGKKEKK).

The protein localises to the cell membrane. Its function is as follows. Potential calcium-dependent cell-adhesion protein. May be involved in the establishment and maintenance of specific neuronal connections in the brain. This Homo sapiens (Human) protein is Protocadherin gamma-A9 (PCDHGA9).